Consider the following 346-residue polypeptide: MENTDHTNNEHRLTQLLSIAEECETLDRLKQLVDSGRIFTAYNGFEPSGRIHIAQALITVMNTNNIIECGGQMIIYIADWFAKMNLKMNGDINKIRELGRYFIEVFKACGINLDGTRFIWASEFIASNPSYIERMLDIAEFSTISRVKRCCQIMGRNESDCLKASQIFYPCMQAADVFELVPEGIDICQLGIDQRKVNMLAIEYANDRGLKIPISLSHHMLMSLSGPKKKMSKSDPQGAIFMDDTEQEVSEKISRAYCTDETFDNPIFEYIKYLLLRWFGTLNLCGKIYTDIESIQEDFSSMNKRELKTDVANYINTIIDLVREHFKKPELSELLSNVKSYQQPSK.

A 'HIGH' region motif is present at residues 47–56 (PSGRIHIAQA). The short motif at 230–234 (KMSKS) is the 'KMSKS' region element. Lys233 contacts ATP.

This sequence belongs to the class-I aminoacyl-tRNA synthetase family. As to quaternary structure, homodimer.

The catalysed reaction is tRNA(Tyr) + L-tyrosine + ATP = L-tyrosyl-tRNA(Tyr) + AMP + diphosphate + H(+). Functionally, catalyzes the attachment of tyrosine to tRNA(Tyr) in a two-step reaction: tyrosine is first activated by ATP to form Tyr-AMP and then transferred to the acceptor end of tRNA(Tyr). This Acanthamoeba polyphaga (Amoeba) protein is Tyrosine--tRNA ligase (YARS).